A 461-amino-acid chain; its full sequence is Photosystem II CP43 reaction center protein (461 aa).

Residues 1-2 (ME) constitute a propeptide that is removed on maturation. Residue Thr-3 is modified to N-acetylthreonine. Phosphothreonine is present on Thr-3. The next 5 membrane-spanning stretches (helical) occupy residues 57–81 (LFEV…PHIA), 122–143 (LIGP…KDKN), 166–188 (KAMY…RIIS), 243–263 (KPWG…LSYS), and 279–300 (WFNN…ASQA). Glu-355 serves as a coordination point for [CaMn4O5] cluster. The chain crosses the membrane as a helical span at residues 435–459 (RARAAAAGFEKGIDRDTEPVLSMKP).

Belongs to the PsbB/PsbC family. PsbC subfamily. As to quaternary structure, PSII is composed of 1 copy each of membrane proteins PsbA, PsbB, PsbC, PsbD, PsbE, PsbF, PsbH, PsbI, PsbJ, PsbK, PsbL, PsbM, PsbT, PsbX, PsbY, PsbZ, Psb30/Ycf12, at least 3 peripheral proteins of the oxygen-evolving complex and a large number of cofactors. It forms dimeric complexes. It depends on Binds multiple chlorophylls and provides some of the ligands for the Ca-4Mn-5O cluster of the oxygen-evolving complex. It may also provide a ligand for a Cl- that is required for oxygen evolution. PSII binds additional chlorophylls, carotenoids and specific lipids. as a cofactor.

It is found in the plastid. The protein resides in the chloroplast thylakoid membrane. Its function is as follows. One of the components of the core complex of photosystem II (PSII). It binds chlorophyll and helps catalyze the primary light-induced photochemical processes of PSII. PSII is a light-driven water:plastoquinone oxidoreductase, using light energy to abstract electrons from H(2)O, generating O(2) and a proton gradient subsequently used for ATP formation. The chain is Photosystem II CP43 reaction center protein from Oltmannsiellopsis viridis (Marine flagellate).